Reading from the N-terminus, the 427-residue chain is Serine--tRNA ligase (427 aa).

235–237 (TSE) is an L-serine binding site. 266-268 (RSE) contacts ATP. E289 is an L-serine binding site. 353-356 (EISS) provides a ligand contact to ATP. S388 lines the L-serine pocket.

It belongs to the class-II aminoacyl-tRNA synthetase family. Type-1 seryl-tRNA synthetase subfamily. In terms of assembly, homodimer. The tRNA molecule binds across the dimer.

The protein resides in the cytoplasm. It catalyses the reaction tRNA(Ser) + L-serine + ATP = L-seryl-tRNA(Ser) + AMP + diphosphate + H(+). The enzyme catalyses tRNA(Sec) + L-serine + ATP = L-seryl-tRNA(Sec) + AMP + diphosphate + H(+). It participates in aminoacyl-tRNA biosynthesis; selenocysteinyl-tRNA(Sec) biosynthesis; L-seryl-tRNA(Sec) from L-serine and tRNA(Sec): step 1/1. In terms of biological role, catalyzes the attachment of serine to tRNA(Ser). Is also able to aminoacylate tRNA(Sec) with serine, to form the misacylated tRNA L-seryl-tRNA(Sec), which will be further converted into selenocysteinyl-tRNA(Sec). This chain is Serine--tRNA ligase, found in Chromobacterium violaceum (strain ATCC 12472 / DSM 30191 / JCM 1249 / CCUG 213 / NBRC 12614 / NCIMB 9131 / NCTC 9757 / MK).